Reading from the N-terminus, the 187-residue chain is Abscisic acid receptor PYL9 (187 aa).

The interval 27–178 (HLCRENQCTS…NLKSLADVSE (152 aa)) is START-like. 2 disulfides stabilise this stretch: cysteine 29–cysteine 159 and cysteine 34–cysteine 159. Abscisate contacts are provided by residues lysine 63, 91–96 (ATTSTE), 118–124 (RLKNYSS), and glutamate 143. The short motif at 87–91 (SGLPA) is the Gate loop element. The Latch loop signature appears at 117-119 (HRL).

It belongs to the PYR/PYL/RCAR abscisic acid intracellular receptor family. Homodimer. Monomer. Binds ABA on one subunit only. Binds to CARs protein in an ABA-independent manner, both at the plasma membrane and in the nucleus. Binds specifically (+)-ABA but not (-)-ABA. Interacts with HAB1, ABI1 and ABI2, and possibly with other PP2Cs. Interacts with TOPP1. Interacts with DDA1. Expressed in root tips, vascular tissues, stomata, flowers, pollen tubes and developing seeds.

Its subcellular location is the cytoplasm. It is found in the nucleus. It localises to the cell membrane. Receptor for abscisic acid (ABA) required for ABA-mediated responses such as stomatal closure and germination inhibition. Inhibits the activity of group-A protein phosphatases type 2C (PP2Cs) in an ABA-independent manner but more efficiently when activated by ABA. Confers enhanced sensitivity to ABA. Can be activated only by (+)-ABA but not by (-)-ABA. The protein is Abscisic acid receptor PYL9 (PYL9) of Arabidopsis thaliana (Mouse-ear cress).